The chain runs to 334 residues: Chitinase 9 (334 aa).

A signal peptide spans 1–23 (MKATTTAVALLVAAAAMAAQVVA). The region spanning 24–64 (EQCGSQAGGALCPNCLCCSSYGWCGSTSDYCGDGCQSQCDG) is the Chitin-binding type-1 domain. 8 disulfide bridges follow: Cys-26/Cys-41, Cys-35/Cys-47, Cys-38/Cys-65, Cys-40/Cys-54, Cys-58/Cys-62, Cys-107/Cys-169, Cys-181/Cys-189, and Cys-288/Cys-320. Glu-151 (proton donor) is an active-site residue.

It belongs to the glycosyl hydrolase 19 family. Chitinase class I subfamily. As to expression, expressed at high levels in roots, sheaths and meristems.

The enzyme catalyses Random endo-hydrolysis of N-acetyl-beta-D-glucosaminide (1-&gt;4)-beta-linkages in chitin and chitodextrins.. May play a role in defense against fungal pathogens containing chitin. This is Chitinase 9 (Cht9) from Oryza sativa subsp. japonica (Rice).